We begin with the raw amino-acid sequence, 198 residues long: ATP synthase subunit b (198 aa).

The chain crosses the membrane as a helical span at residues 49-67; sequence IWKWANFLILAGGLGYLVG.

It belongs to the ATPase B chain family. F-type ATPases have 2 components, F(1) - the catalytic core - and F(0) - the membrane proton channel. F(1) has five subunits: alpha(3), beta(3), gamma(1), delta(1), epsilon(1). F(0) has three main subunits: a(1), b(2) and c(10-14). The alpha and beta chains form an alternating ring which encloses part of the gamma chain. F(1) is attached to F(0) by a central stalk formed by the gamma and epsilon chains, while a peripheral stalk is formed by the delta and b chains.

The protein resides in the cell inner membrane. Its function is as follows. F(1)F(0) ATP synthase produces ATP from ADP in the presence of a proton or sodium gradient. F-type ATPases consist of two structural domains, F(1) containing the extramembraneous catalytic core and F(0) containing the membrane proton channel, linked together by a central stalk and a peripheral stalk. During catalysis, ATP synthesis in the catalytic domain of F(1) is coupled via a rotary mechanism of the central stalk subunits to proton translocation. In terms of biological role, component of the F(0) channel, it forms part of the peripheral stalk, linking F(1) to F(0). The polypeptide is ATP synthase subunit b (Solibacter usitatus (strain Ellin6076)).